Reading from the N-terminus, the 1185-residue chain is DNA-directed RNA polymerase subunit beta' (1185 aa).

Zn(2+) is bound by residues Cys67, Cys69, Cys82, and Cys85. Asp457, Asp459, and Asp461 together coordinate Mg(2+). Residues Cys802, Cys876, Cys883, and Cys886 each contribute to the Zn(2+) site.

It belongs to the RNA polymerase beta' chain family. As to quaternary structure, the RNAP catalytic core consists of 2 alpha, 1 beta, 1 beta' and 1 omega subunit. When a sigma factor is associated with the core the holoenzyme is formed, which can initiate transcription. The cofactor is Mg(2+). Zn(2+) is required as a cofactor.

The enzyme catalyses RNA(n) + a ribonucleoside 5'-triphosphate = RNA(n+1) + diphosphate. DNA-dependent RNA polymerase catalyzes the transcription of DNA into RNA using the four ribonucleoside triphosphates as substrates. The sequence is that of DNA-directed RNA polymerase subunit beta' from Clostridium novyi (strain NT).